A 401-amino-acid chain; its full sequence is Phosphoglycerate kinase (401 aa).

Substrate-binding positions include 20 to 22, R35, 58 to 61, R117, and R154; these read DFN and HLGR. Residues K204, G298, E329, and 358–361 each bind ATP; that span reads GGDS.

The protein belongs to the phosphoglycerate kinase family. Monomer.

It is found in the cytoplasm. The enzyme catalyses (2R)-3-phosphoglycerate + ATP = (2R)-3-phospho-glyceroyl phosphate + ADP. It participates in carbohydrate degradation; glycolysis; pyruvate from D-glyceraldehyde 3-phosphate: step 2/5. This is Phosphoglycerate kinase from Bifidobacterium longum (strain NCC 2705).